Here is a 275-residue protein sequence, read N- to C-terminus: Lycopene elongase/hydratase (275 aa).

A run of 9 helical transmembrane segments spans residues 13–33 (FWLY…TTVG), 38–58 (APAV…LYGI), 84–104 (AAVA…AAPL), 107–127 (EAWP…APPL), 134–154 (VLDS…YAGV), 160–180 (PLLA…FSAI), 203–223 (ALAY…LVDV), 225–245 (FGLL…LQVA), and 253–273 (YPAV…WGVV).

It belongs to the UbiA prenyltransferase family.

The protein resides in the cell membrane. It catalyses the reaction all-trans-lycopene + dimethylallyl diphosphate + H2O = dihydroisopentenyldehydrorhodopin + diphosphate. The catalysed reaction is isopentenyldehydrorhodopin + dimethylallyl diphosphate + H2O = dihydrobisanhydrobacterioruberin + diphosphate. It participates in carotenoid biosynthesis. Its activity is regulated as follows. Inhibited by bacterioopsin. Its function is as follows. Involved in the biosynthesis of the acyclic C50 carotenoid bacterioruberin (BR). Acts as a bifunctional elongase/hydratase that catalyzes the elongation of lycopene by attaching a C(5) isoprene unit at C-2, as well as the hydroxylation of the previous end of the molecule. The enzyme acts at both ends of the substrate, and catalyzes the conversion of lycopene to the C(45) intermediate dihydroisopentenyldehydrorhodopin (DH-IDR) and the conversion of isopentenyldehydrorhodopin (IDR) to the C(50) carotenoid dihydrobisanhydrobacterioruberin (DH-BABR). Can also catalyze the conversion of lycopene to tetrahydrobisanhydrobacterioruberin (TH-BABR). In Halobacterium salinarum (strain ATCC 700922 / JCM 11081 / NRC-1) (Halobacterium halobium), this protein is Lycopene elongase/hydratase.